The primary structure comprises 78 residues: MSRVCQVTGKGPVTGNNISHANNKTRRRFLPNLQHHRFWVESEKRFVRLRVSAKGMRVIDKRGIDVVLAELRARGEKV.

A disordered region spans residues 1 to 20; that stretch reads MSRVCQVTGKGPVTGNNISH.

It belongs to the bacterial ribosomal protein bL28 family.

This chain is Large ribosomal subunit protein bL28, found in Stutzerimonas stutzeri (strain A1501) (Pseudomonas stutzeri).